A 404-amino-acid polypeptide reads, in one-letter code: Keratin, type I cuticular Ha3-I (404 aa).

The interval 1–56 (MSYSCGLPNLSCRTSCSSRPCVPPSCHGCTLPGACNIPANVSNCNWFCEGSFNGSE) is head. The 312-residue stretch at 56–367 (EKETMQFLND…SLLESEDCKL (312 aa)) folds into the IF rod domain. The tract at residues 57–91 (KETMQFLNDRLASYLEKVRQLERDNAELENLIRER) is coil 1A. Residues 92–102 (SQQQEPLVCAS) form a linker 1 region. Residues 103–203 (YQSYFKTIEE…HEQEVNTLRC (101 aa)) are coil 1B. Residues 204–219 (QLGGRLNVEVDAAPAV) are linker 12. The interval 220 to 363 (DLNQVLNETR…NTYRSLLESE (144 aa)) is coil 2. A tail region spans residues 364 to 404 (DCKLPSNPCAITNACDKSTGPCISNPCGPRARCGPCNTFGY).

The protein belongs to the intermediate filament family.

The polypeptide is Keratin, type I cuticular Ha3-I (Pan troglodytes (Chimpanzee)).